A 125-amino-acid polypeptide reads, in one-letter code: Photosystem II extrinsic protein U (125 aa).

Residues 1-29 form the signal peptide; the sequence is MKRLLSWLTGLVVIAGLLIGLLVPPSVSA.

This sequence belongs to the PsbU family. In terms of assembly, PSII is composed of 1 copy each of membrane proteins PsbA, PsbB, PsbC, PsbD, PsbE, PsbF, PsbH, PsbI, PsbJ, PsbK, PsbL, PsbM, PsbT, PsbX, PsbY, PsbZ, Psb30/Ycf12, peripheral proteins PsbO, CyanoQ (PsbQ), PsbU, PsbV and a large number of cofactors. It forms dimeric complexes.

Its subcellular location is the cellular thylakoid membrane. Functionally, one of the extrinsic, lumenal subunits of photosystem II (PSII). PSII is a light-driven water plastoquinone oxidoreductase, using light energy to abstract electrons from H(2)O, generating a proton gradient subsequently used for ATP formation. The extrinsic proteins stabilize the structure of photosystem II oxygen-evolving complex (OEC), the ion environment of oxygen evolution and protect the OEC against heat-induced inactivation. In Synechococcus sp. (strain CC9311), this protein is Photosystem II extrinsic protein U.